A 129-amino-acid chain; its full sequence is Profilin-4 (129 aa).

This sequence belongs to the profilin family. Expressed in testis, in germ cells in seminiferous tubules (at protein level).

The protein resides in the cytoplasm. Its function is as follows. Involved in male fertility. Required for manchette development and acrosome biogenesis during spermiogenesis. Binds in vitro to phospholipids, including phosphatidylinositol 3-phosphate (PtdIns(3)P), phosphatidylinositol 4,5-bisphosphate (PtdIns(4,5)P2), phosphatidylinositol 4-phosphate (PtdIns(4)P) and phosphatidic acid (PA). Contrary to other profilin family members, does not bind to actin in vitro. In Mus musculus (Mouse), this protein is Profilin-4 (Pfn4).